The following is a 197-amino-acid chain: Xanthine phosphoribosyltransferase (197 aa).

Residues L20 and N27 each contribute to the xanthine site. 128 to 132 (ANGQA) contacts 5-phospho-alpha-D-ribose 1-diphosphate. K156 serves as a coordination point for xanthine.

The protein belongs to the purine/pyrimidine phosphoribosyltransferase family. Xpt subfamily. Homodimer.

The protein localises to the cytoplasm. The catalysed reaction is XMP + diphosphate = xanthine + 5-phospho-alpha-D-ribose 1-diphosphate. It functions in the pathway purine metabolism; XMP biosynthesis via salvage pathway; XMP from xanthine: step 1/1. Converts the preformed base xanthine, a product of nucleic acid breakdown, to xanthosine 5'-monophosphate (XMP), so it can be reused for RNA or DNA synthesis. In Bacillus anthracis (strain A0248), this protein is Xanthine phosphoribosyltransferase.